The following is a 459-amino-acid chain: Glutamyl-tRNA reductase (459 aa).

Substrate is bound by residues 49–52 (TCNR), Ser-109, 114–116 (EQQ), and Gln-120. Cys-50 functions as the Nucleophile in the catalytic mechanism. An NADP(+)-binding site is contributed by 189 to 194 (GAGAMG).

The protein belongs to the glutamyl-tRNA reductase family. Homodimer.

It catalyses the reaction (S)-4-amino-5-oxopentanoate + tRNA(Glu) + NADP(+) = L-glutamyl-tRNA(Glu) + NADPH + H(+). It participates in porphyrin-containing compound metabolism; protoporphyrin-IX biosynthesis; 5-aminolevulinate from L-glutamyl-tRNA(Glu): step 1/2. In terms of biological role, catalyzes the NADPH-dependent reduction of glutamyl-tRNA(Glu) to glutamate 1-semialdehyde (GSA). The sequence is that of Glutamyl-tRNA reductase from Mycolicibacterium paratuberculosis (strain ATCC BAA-968 / K-10) (Mycobacterium paratuberculosis).